We begin with the raw amino-acid sequence, 398 residues long: Potassium channel subfamily K member 4 (398 aa).

The Cytoplasmic segment spans residues 1–3 (MRS). The chain crosses the membrane as a helical span at residues 4 to 24 (TTLLALLALVLLYLVSGALVF). The Extracellular portion of the chain corresponds to 25–88 (QALEQPHEQQ…WTNSSNHSSA (64 aa)). Asn-81 and Asn-84 each carry an N-linked (GlcNAc...) asparagine glycan. The helical intramembrane region spans 89-103 (WNLGSAFFFSGTIIT). Thr-104, Ile-105, Gly-106, and Tyr-107 together coordinate K(+). The interval 104-109 (TIGYGN) is selectivity filter 1. Residues 104–110 (TIGYGNI) lie within the membrane without spanning it. Over 111–118 (VLHTDAGR) the chain is Extracellular. A helical transmembrane segment spans residues 119–151 (LFCIFYALVGIPLFGMLLAGVGDRLGSSLRRGI). Residues 152-173 (GHIEAIFLKWHVPPGLVRSLSA) are Cytoplasmic-facing. A helical transmembrane segment spans residues 174–195 (VLFLLIGCLLFVLTPTFVFSYM). At 196–200 (ESWSK) the chain is on the extracellular side. Residues 201 to 214 (LEAIYFVIVTLTTV) constitute an intramembrane region (helical). Residues Thr-213, Val-214, Gly-215, and Phe-216 each coordinate K(+). Residues 213–218 (TVGFGD) are selectivity filter 2. Residues 215–220 (GFGDYV) lie within the membrane without spanning it. At 221–234 (PGDGTGQNSPAYQP) the chain is on the extracellular side. Residues 235–261 (LVWFWILFGLAYFASVLTTIGNWLRAV) form a helical membrane-spanning segment. Residues 262–398 (SRRTRAEMGG…GRLRDKAVPV (137 aa)) lie on the Cytoplasmic side of the membrane. The span at 282–292 (TVTARVTQRTG) shows a compositional bias: polar residues. The segment at 282 to 398 (TVTARVTQRT…GRLRDKAVPV (117 aa)) is disordered. Residues 370–389 (PRGRRRPNPSKKPSRPRGPG) are compositionally biased toward basic residues.

It belongs to the two pore domain potassium channel (TC 1.A.1.8) family. As to quaternary structure, homodimer; disulfide-linked. Forms heterodimers with other 2-pore domain K(+) channel subunits, such as KCNK2 and KCNK10. Post-translationally, N-glycosylated. In terms of tissue distribution, expressed in brain, spinal cord and eye. Not detected in heart, skeletal muscle, liver, lungs, kidney and testis.

It is found in the cell membrane. It localises to the cell projection. The protein localises to the axon. The catalysed reaction is K(+)(in) = K(+)(out). The enzyme catalyses Rb(+)(in) = Rb(+)(out). It catalyses the reaction Cs(+)(in) = Cs(+)(out). Activated by arachidonic acid and other polyunsaturated fatty acids. Not affected by volatile general anesthetics such as chloroform, diethyl ether, halothane and isoflurane. Activated at intracellular and extracellular basic pHs. In terms of biological role, k(+) channel that conducts voltage-dependent outward rectifying currents upon membrane depolarization. Voltage sensing is coupled to K(+) electrochemical gradient in an 'ion flux gating' mode where outward but not inward ion flow opens the gate. Converts to voltage-independent 'leak' conductance mode upon stimulation by various stimuli including mechanical membrane stretch, basic pH, temperature and lipids. Homo- and heterodimerizes to form functional channels with distinct regulatory and gating properties. At trigeminal A-beta afferent nerves, the heterodimer of KCNK2/TREK-1 and KCNK4/TRAAK is mostly coexpressed at nodes of Ranvier where it conducts voltage-independent mechanosensitive and thermosensitive currents, allowing rapid action potential repolarization, high speed and high frequence saltatory conduction on myelinated nerves to ensure prompt sensory responses. Permeable to other monovalent cations such as Rb(+) and Cs(+). This is Potassium channel subfamily K member 4 from Mus musculus (Mouse).